The following is a 187-amino-acid chain: Glutathione-dependent formaldehyde-activating enzyme (187 aa).

Residues 20–167 enclose the CENP-V/GFA domain; sequence FAGGTLVCKC…LKELGLEPYD (148 aa). 7 residues coordinate Zn(2+): C27, C29, C48, C50, C53, C95, and C98.

The protein belongs to the Gfa family. Zn(2+) is required as a cofactor.

The enzyme catalyses S-(hydroxymethyl)glutathione = glutathione + formaldehyde. It functions in the pathway one-carbon metabolism; formaldehyde degradation; formate from formaldehyde (glutathione route): step 1/3. In terms of biological role, catalyzes the condensation of formaldehyde and glutathione to S-hydroxymethylglutathione. This is Glutathione-dependent formaldehyde-activating enzyme from Bradyrhizobium sp. (strain BTAi1 / ATCC BAA-1182).